Reading from the N-terminus, the 963-residue chain is Unconventional myosin-XIX (963 aa).

In terms of domain architecture, Myosin motor spans 35–758 (HQLDDLTKVN…MLELLECGRA (724 aa)). 132 to 139 (GESGAGKT) contacts ATP. The interval 602 to 624 (LEQLLQVLHNTTPHYIRCIKPNS) is actin-binding. IQ domains lie at 762–782 (EQCA…KQEK) and 783–812 (QRRA…AATV). The segment at 829–963 (SKELDGMEEK…LLESHRPVQV (135 aa)) is myMOMA region.

This sequence belongs to the TRAFAC class myosin-kinesin ATPase superfamily. Myosin family. In terms of assembly, myosin is a hexamer of 2 heavy chains and 4 light chains: interacts with myosin light chains MYL9 and MYL12B.

The protein localises to the mitochondrion outer membrane. The protein resides in the cytoplasm. It localises to the cytoskeleton. Actin-based motor molecule with ATPase activity that localizes to the mitochondrion outer membrane. Motor protein that moves towards the plus-end of actin filaments. Required for mitochondrial inheritance during mitosis. May be involved in mitochondrial transport or positioning. This chain is Unconventional myosin-XIX, found in Mus musculus (Mouse).